We begin with the raw amino-acid sequence, 1388 residues long: DNA-directed RNA polymerase subunit beta (1388 aa).

This sequence belongs to the RNA polymerase beta chain family. As to quaternary structure, the RNAP catalytic core consists of 2 alpha, 1 beta, 1 beta' and 1 omega subunit. When a sigma factor is associated with the core the holoenzyme is formed, which can initiate transcription.

The enzyme catalyses RNA(n) + a ribonucleoside 5'-triphosphate = RNA(n+1) + diphosphate. In terms of biological role, DNA-dependent RNA polymerase catalyzes the transcription of DNA into RNA using the four ribonucleoside triphosphates as substrates. The polypeptide is DNA-directed RNA polymerase subunit beta (Stenotrophomonas maltophilia (strain K279a)).